The primary structure comprises 842 residues: Protein P (842 aa).

Residues 1 to 177 (MPLSYQHFRR…FCGSPYSWEQ (177 aa)) form a terminal protein domain (TP) region. Residues 178 to 345 (ELHHGAFLDG…YCLTHLVNLL (168 aa)) are spacer. The segment at 205–271 (SRPPVGSSIQ…RHAKNIASRP (67 aa)) is disordered. Residues 223-239 (GPQSQQRPLDGSQQGRS) are compositionally biased toward polar residues. The polymerase/reverse transcriptase domain (RT) stretch occupies residues 346 to 689 (EDWGPCTEHG…YLNLYPVARQ (344 aa)). The Reverse transcriptase domain occupies 356–599 (KHHIRIPRTP…YSLNFMGYVI (244 aa)). Residues Asp-428, Asp-550, and Asp-551 each coordinate Mg(2+).

It belongs to the hepadnaviridae P protein family.

It catalyses the reaction DNA(n) + a 2'-deoxyribonucleoside 5'-triphosphate = DNA(n+1) + diphosphate. The enzyme catalyses Endonucleolytic cleavage to 5'-phosphomonoester.. Its activity is regulated as follows. Activated by host HSP70 and HSP40 in vitro to be able to bind the epsilon loop of the pgRNA. Because deletion of the RNase H region renders the protein partly chaperone-independent, the chaperones may be needed indirectly to relieve occlusion of the RNA-binding site by this domain. Inhibited by several reverse-transcriptase inhibitors: Lamivudine, Adefovir and Entecavir. Functionally, multifunctional enzyme that converts the viral RNA genome into dsDNA in viral cytoplasmic capsids. This enzyme displays a DNA polymerase activity that can copy either DNA or RNA templates, and a ribonuclease H (RNase H) activity that cleaves the RNA strand of RNA-DNA heteroduplexes in a partially processive 3'- to 5'-endonucleasic mode. Neo-synthesized pregenomic RNA (pgRNA) are encapsidated together with the P protein, and reverse-transcribed inside the nucleocapsid. Initiation of reverse-transcription occurs first by binding the epsilon loop on the pgRNA genome, and is initiated by protein priming, thereby the 5'-end of (-)DNA is covalently linked to P protein. Partial (+)DNA is synthesized from the (-)DNA template and generates the relaxed circular DNA (RC-DNA) genome. After budding and infection, the RC-DNA migrates in the nucleus, and is converted into a plasmid-like covalently closed circular DNA (cccDNA). The activity of P protein does not seem to be necessary for cccDNA generation, and is presumably released from (+)DNA by host nuclear DNA repair machinery. The sequence is that of Protein P from Hepatitis B virus genotype E subtype ayw4 (isolate Kou) (HBV-E).